Here is a 507-residue protein sequence, read N- to C-terminus: Glucose-6-phosphate 1-dehydrogenase (507 aa).

2 residues coordinate NADP(+): Arg57 and Lys168. The substrate site is built by His198, Lys202, Glu236, and Asp255. The active-site Proton acceptor is His260. Lys356 is a substrate binding site.

This sequence belongs to the glucose-6-phosphate dehydrogenase family.

The enzyme catalyses D-glucose 6-phosphate + NADP(+) = 6-phospho-D-glucono-1,5-lactone + NADPH + H(+). The protein operates within carbohydrate degradation; pentose phosphate pathway; D-ribulose 5-phosphate from D-glucose 6-phosphate (oxidative stage): step 1/3. Its function is as follows. Catalyzes the oxidation of glucose 6-phosphate to 6-phosphogluconolactone. In Chlamydia muridarum (strain MoPn / Nigg), this protein is Glucose-6-phosphate 1-dehydrogenase.